Here is a 318-residue protein sequence, read N- to C-terminus: Glycine--tRNA ligase alpha subunit (318 aa).

It belongs to the class-II aminoacyl-tRNA synthetase family. Tetramer of two alpha and two beta subunits.

It is found in the cytoplasm. It carries out the reaction tRNA(Gly) + glycine + ATP = glycyl-tRNA(Gly) + AMP + diphosphate. In Methylibium petroleiphilum (strain ATCC BAA-1232 / LMG 22953 / PM1), this protein is Glycine--tRNA ligase alpha subunit.